The sequence spans 859 residues: Collagen alpha-1(II) chain (859 aa).

The tract at residues 1 to 607 is disordered; sequence LQGLPGKDGE…LGQTEKGPDP (607 aa). Residues Pro-31 and Pro-40 each carry the 4-hydroxyproline modification. Pro-42 is subject to 3-hydroxyproline. Residues Pro-43 and Pro-46 each carry the 4-hydroxyproline modification. Positions 78–121 are enriched in low complexity; that stretch reads ERGSPGAQGLQGPRGLPGTPGTDGPKGATGPAGPNGAQGPPGLQ. A compositionally biased stretch (basic and acidic residues) spans 136–147; the sequence is KGDRGDVGEKGP. Composition is skewed to low complexity over residues 204–220 and 249–277; these read PAGF…PGAK and PTGV…AGRV. Pro-279 carries the 3-hydroxyproline modification. A compositionally biased stretch (pro residues) spans 279–292; the sequence is PPGPNGNPGPPGPP. 4-hydroxyproline is present on residues Pro-280, Pro-286, and Pro-292. Over residues 306-321 the composition is skewed to low complexity; it reads DAGPPGRAGDPGLQGP. The span at 487–501 shows a compositional bias: basic and acidic residues; sequence RGDKGETGEAGERGL. The tract at residues 491–586 is triple-helical region; that stretch reads GETGEAGERG…PGPPGPPGPP (96 aa). Pro-516 is subject to 3-hydroxyproline. Low complexity predominate over residues 520-529; it reads SGDQGAAGPA. A 4-hydroxyproline modification is found at Pro-553. 3-hydroxyproline is present on Pro-558. 4-hydroxyproline is present on Pro-559. Positions 570–586 are enriched in pro residues; sequence PAGPPGNPGPPGPPGPP. 3-hydroxyproline is present on Pro-573. Residues Pro-574 and Pro-577 each carry the 4-hydroxyproline modification. Pro-579 bears the 3-hydroxyproline mark. 4-hydroxyproline occurs at positions 580 and 583. Pro-585 carries the post-translational modification 3-hydroxyproline. Pro-586 is modified (4-hydroxyproline). The segment at 587-613 is nonhelical region (C-terminal); the sequence is GTGIDMSAFAGLGQTEKGPDPIRYMRA. Residues 614–859 constitute a propeptide, C-terminal propeptide; it reads DEAAGGLRQH…GVDIGPVCFL (246 aa). One can recognise a Fibrillar collagen NC1 domain in the interval 625–859; it reads VEVDATLKSL…GVDIGPVCFL (235 aa). 3 cysteine pairs are disulfide-bonded: Cys-655/Cys-687, Cys-695/Cys-857, and Cys-765/Cys-810. Positions 673, 675, 676, 678, and 681 each coordinate Ca(2+). N-linked (GlcNAc...) asparagine glycosylation is present at Asn-760.

It belongs to the fibrillar collagen family. Homotrimers of alpha 1(II) chains. Contains mostly 4-hydroxyproline. Prolines at the third position of the tripeptide repeating unit (G-X-P) are 4-hydroxylated in some or all of the chains. Post-translationally, contains 3-hydroxyproline at a few sites. This modification occurs on the first proline residue in the sequence motif Gly-Pro-Hyp, where Hyp is 4-hydroxyproline. In terms of processing, lysine residues at the third position of the tripeptide repeating unit (G-X-Y) are 5-hydroxylated in some or all of the chains. O-glycosylated on hydroxylated lysine residues. The O-linked glycan consists of a Glc-Gal disaccharide.

The protein localises to the secreted. It localises to the extracellular space. Its subcellular location is the extracellular matrix. Functionally, type II collagen is specific for cartilaginous tissues. It is essential for the normal embryonic development of the skeleton, for linear growth and for the ability of cartilage to resist compressive forces. This chain is Collagen alpha-1(II) chain, found in Gallus gallus (Chicken).